Reading from the N-terminus, the 67-residue chain is DNA-directed RNA polymerase subunit omega (67 aa).

The protein belongs to the RNA polymerase subunit omega family. The RNAP catalytic core consists of 2 alpha, 1 beta, 1 beta' and 1 omega subunit. When a sigma factor is associated with the core the holoenzyme is formed, which can initiate transcription.

It carries out the reaction RNA(n) + a ribonucleoside 5'-triphosphate = RNA(n+1) + diphosphate. In terms of biological role, promotes RNA polymerase assembly. Latches the N- and C-terminal regions of the beta' subunit thereby facilitating its interaction with the beta and alpha subunits. In Treponema pallidum (strain Nichols), this protein is DNA-directed RNA polymerase subunit omega (rpoZ).